Reading from the N-terminus, the 502-residue chain is Lysine--tRNA ligase (502 aa).

Mg(2+)-binding residues include Glu413 and Glu420.

Belongs to the class-II aminoacyl-tRNA synthetase family. As to quaternary structure, homodimer. It depends on Mg(2+) as a cofactor.

The protein localises to the cytoplasm. It carries out the reaction tRNA(Lys) + L-lysine + ATP = L-lysyl-tRNA(Lys) + AMP + diphosphate. The polypeptide is Lysine--tRNA ligase (Aromatoleum aromaticum (strain DSM 19018 / LMG 30748 / EbN1) (Azoarcus sp. (strain EbN1))).